We begin with the raw amino-acid sequence, 316 residues long: MPVLLECLSHTPLSGYCDPAPEVVAEVGRIHAAARARVADFDPQLVVVFAPDHYNGFFYDVMPPFCIGASASAVGDFGSLAGQLAVPADLALDLAQAVLAADVDVALSYRMQVDHGCAQALEILTGSLDRYPVVPVFINSVAPPMASCRRARLLGDALGRSLARSGQRVLVIGSGGISHEPPVPELAGATDEVAERLIAGRNPSREARAARQARTVAAARAFAAGDSRLHPLNPEWDRAFLKLLEEGQLPALDGFTDSAITREAGKSAHEVRTWIAAFGALQAYGPYRATLDYYRPIPEWIAGFGAMHARPIAETA.

Histidine 115 acts as the Proton donor in catalysis. Residue histidine 179 is the Proton acceptor of the active site.

The protein belongs to the LigB/MhpB extradiol dioxygenase family. As to quaternary structure, homotetramer. The cofactor is Fe(2+).

It catalyses the reaction 3-(2,3-dihydroxyphenyl)propanoate + O2 = (2Z,4E)-2-hydroxy-6-oxonona-2,4-dienedioate + H(+). The enzyme catalyses (2E)-3-(2,3-dihydroxyphenyl)prop-2-enoate + O2 = (2Z,4E,7E)-2-hydroxy-6-oxonona-2,4,7-trienedioate + H(+). The protein operates within aromatic compound metabolism; 3-phenylpropanoate degradation. Catalyzes the non-heme iron(II)-dependent oxidative cleavage of 2,3-dihydroxyphenylpropionic acid and 2,3-dihydroxicinnamic acid into 2-hydroxy-6-ketononadienedioate and 2-hydroxy-6-ketononatrienedioate, respectively. The polypeptide is 2,3-dihydroxyphenylpropionate/2,3-dihydroxicinnamic acid 1,2-dioxygenase (Paraburkholderia xenovorans (strain LB400)).